Here is a 187-residue protein sequence, read N- to C-terminus: UPF0301 protein YqgE (187 aa).

It belongs to the UPF0301 (AlgH) family.

In Shigella boydii serotype 4 (strain Sb227), this protein is UPF0301 protein YqgE.